A 581-amino-acid chain; its full sequence is Adenine deaminase (581 aa).

The protein belongs to the metallo-dependent hydrolases superfamily. Adenine deaminase family. The cofactor is Mn(2+).

The catalysed reaction is adenine + H2O + H(+) = hypoxanthine + NH4(+). The chain is Adenine deaminase from Brucella abortus (strain 2308).